Here is a 157-residue protein sequence, read N- to C-terminus: S-ribosylhomocysteine lyase (157 aa).

3 residues coordinate Fe cation: H54, H58, and C124.

It belongs to the LuxS family. In terms of assembly, homodimer. Fe cation is required as a cofactor.

It catalyses the reaction S-(5-deoxy-D-ribos-5-yl)-L-homocysteine = (S)-4,5-dihydroxypentane-2,3-dione + L-homocysteine. Involved in the synthesis of autoinducer 2 (AI-2) which is secreted by bacteria and is used to communicate both the cell density and the metabolic potential of the environment. The regulation of gene expression in response to changes in cell density is called quorum sensing. Catalyzes the transformation of S-ribosylhomocysteine (RHC) to homocysteine (HC) and 4,5-dihydroxy-2,3-pentadione (DPD). The polypeptide is S-ribosylhomocysteine lyase (Lactobacillus helveticus (strain DPC 4571)).